Reading from the N-terminus, the 365-residue chain is Mitogen-activated protein kinase 13 (365 aa).

The Protein kinase domain maps to 25–308 (YVSPTHVGSG…AAQALTHPFF (284 aa)). 31–39 (VGSGAYGSV) contacts ATP. Residue Ser-47 is modified to Phosphoserine. Residue Lys-54 coordinates ATP. Asp-150 functions as the Proton acceptor in the catalytic mechanism. Thr-180 is subject to Phosphothreonine; by MAP2K3, MAP2K4, MAP2K6 and MAP2K7. Residues 180 to 182 (TGY) carry the TXY motif. The residue at position 182 (Tyr-182) is a Phosphotyrosine; by MAP2K3, MAP2K4, MAP2K6 and MAP2K7. Ser-350 is subject to Phosphoserine.

It belongs to the protein kinase superfamily. CMGC Ser/Thr protein kinase family. MAP kinase subfamily. As to quaternary structure, interacts with MAPK8IP2. Mg(2+) serves as cofactor. Post-translationally, dually phosphorylated on Thr-180 and Tyr-182 by MAP2K3/MKK3, MAP2K4/MKK4, MAP2K6/MKK6 and MAP2K7/MKK7, which activates the enzyme. Dephosphorylated by dual specificity phosphatase DUSP1.

The catalysed reaction is L-seryl-[protein] + ATP = O-phospho-L-seryl-[protein] + ADP + H(+). It carries out the reaction L-threonyl-[protein] + ATP = O-phospho-L-threonyl-[protein] + ADP + H(+). Its activity is regulated as follows. Activated by phosphorylation on threonine and tyrosine by dual specificity kinases, MAP2K3/MKK3, MAP2K6/MKK6, MAP2K4/MKK4 and MAP2K7/MKK7. Activation by ultraviolet radiation, hyperosmotic shock, anisomycin or by TNF-alpha is mediated by MAP2K3/MKK3. Inhibited by dual specificity phosphatase DUSP1. Its function is as follows. Serine/threonine kinase which acts as an essential component of the MAP kinase signal transduction pathway. MAPK13 is one of the four p38 MAPKs which play an important role in the cascades of cellular responses evoked by extracellular stimuli such as pro-inflammatory cytokines or physical stress leading to direct activation of transcription factors such as ELK1 and ATF2. Accordingly, p38 MAPKs phosphorylate a broad range of proteins and it has been estimated that they may have approximately 200 to 300 substrates each. MAPK13 is one of the less studied p38 MAPK isoforms. Some of the targets are downstream kinases such as MAPKAPK2, which are activated through phosphorylation and further phosphorylate additional targets. Plays a role in the regulation of protein translation by phosphorylating and inactivating EEF2K. Involved in cytoskeletal remodeling through phosphorylation of MAPT and STMN1. Mediates UV irradiation induced up-regulation of the gene expression of CXCL14. Plays an important role in the regulation of epidermal keratinocyte differentiation, apoptosis and skin tumor development. Phosphorylates the transcriptional activator MYB in response to stress which leads to rapid MYB degradation via a proteasome-dependent pathway. MAPK13 also phosphorylates and down-regulates PRKD1 during regulation of insulin secretion in pancreatic beta cells. The sequence is that of Mitogen-activated protein kinase 13 (MAPK13) from Pan troglodytes (Chimpanzee).